The following is a 391-amino-acid chain: Casein kinase II subunit alpha (391 aa).

Residues 36–41 are interaction with beta subunit; that stretch reads QDDYQL. The Protein kinase domain maps to 39–324; that stretch reads YQLVRKLGRG…AREAMEHPYF (286 aa). Residues 45–53 and K68 contribute to the ATP site; that span reads LGRGKYSEV. Residue D156 is the Proton acceptor of the active site. Residues T344 and T360 each carry the phosphothreonine; by CDK1 modification. Phosphoserine; by CDK1 is present on residues S362 and S370.

This sequence belongs to the protein kinase superfamily. Ser/Thr protein kinase family. CK2 subfamily. As to quaternary structure, heterotetramer composed of two catalytic subunits (alpha chain and/or alpha' chain) and two regulatory subunits (beta chains). The tetramer can exist as a combination of 2 alpha/2 beta, 2 alpha'/2 beta or 1 alpha/1 alpha'/2 beta subunits. Also part of a CK2-SPT16-SSRP1 complex composed of SSRP1, SUPT16H, CSNK2A1, CSNK2A2 and CSNK2B, which forms following UV irradiation. Interacts with RNPS1. Interacts with SNAI1. Interacts with PML. Interacts with CCAR2. Interacts with HIRIP3. In terms of processing, phosphorylated at Thr-344, Thr-360, Ser-362 and Ser-370 by CDK1 in prophase and metaphase and dephosphorylated during anaphase. Phosphorylation does not directly affect casein kinase 2 activity, but may contribute to its regulation by forming binding sites for interacting proteins and/or targeting it to different compartments.

Its subcellular location is the nucleus. The enzyme catalyses L-seryl-[protein] + ATP = O-phospho-L-seryl-[protein] + ADP + H(+). It catalyses the reaction L-threonyl-[protein] + ATP = O-phospho-L-threonyl-[protein] + ADP + H(+). Its activity is regulated as follows. Constitutively active protein kinase whose activity is not directly affected by phosphorylation. Seems to be regulated by level of expression and localization. Catalytic subunit of a constitutively active serine/threonine-protein kinase complex that phosphorylates a large number of substrates containing acidic residues C-terminal to the phosphorylated serine or threonine. Regulates numerous cellular processes, such as cell cycle progression, apoptosis and transcription, as well as viral infection. May act as a regulatory node which integrates and coordinates numerous signals leading to an appropriate cellular response. During mitosis, functions as a component of the p53/TP53-dependent spindle assembly checkpoint (SAC) that maintains cyclin-B-CDK1 activity and G2 arrest in response to spindle damage. Also required for p53/TP53-mediated apoptosis, phosphorylating 'Ser-392' of p53/TP53 following UV irradiation. Phosphorylates a number of DNA repair proteins in response to DNA damage, such as MDC1, MRE11, RAD9A, RAD51 and HTATSF1, promoting their recruitment to DNA damage sites. Can also negatively regulate apoptosis. Phosphorylates the caspases CASP9 and CASP2 and the apoptotic regulator NOL3. Phosphorylation protects CASP9 from cleavage and activation by CASP8, and inhibits the dimerization of CASP2 and activation of CASP8. Phosphorylates YY1, protecting YY1 from cleavage by CASP7 during apoptosis. Regulates transcription by direct phosphorylation of RNA polymerases I, II, III and IV. Also phosphorylates and regulates numerous transcription factors including NF-kappa-B, STAT1, CREB1, IRF1, IRF2, ATF1, ATF4, SRF, MAX, JUN, FOS, MYC and MYB. Phosphorylates Hsp90 and its co-chaperones FKBP4 and CDC37, which is essential for chaperone function. Mediates sequential phosphorylation of FNIP1, promoting its gradual interaction with Hsp90, leading to activate both kinase and non-kinase client proteins of Hsp90. Regulates Wnt signaling by phosphorylating CTNNB1 and the transcription factor LEF1. Acts as an ectokinase that phosphorylates several extracellular proteins. Phosphorylates PML at 'Ser-565' and primes it for ubiquitin-mediated degradation. Plays an important role in the circadian clock function by phosphorylating BMAL1 at 'Ser-90' which is pivotal for its interaction with CLOCK and which controls CLOCK nuclear entry. Phosphorylates FMR1, promoting FMR1-dependent formation of a membraneless compartment. May phosphorylate histone H2A on 'Ser-1'. The sequence is that of Casein kinase II subunit alpha (Csnk2a1) from Rattus norvegicus (Rat).